We begin with the raw amino-acid sequence, 414 residues long: Glutamyl-tRNA reductase (414 aa).

Substrate is bound by residues 49–52, S108, 113–115, and Q119; these read TCNR and EPQ. C50 (nucleophile) is an active-site residue. NADP(+) is bound at residue 188–193; sequence GAGQTG.

Belongs to the glutamyl-tRNA reductase family. As to quaternary structure, homodimer.

The enzyme catalyses (S)-4-amino-5-oxopentanoate + tRNA(Glu) + NADP(+) = L-glutamyl-tRNA(Glu) + NADPH + H(+). It functions in the pathway porphyrin-containing compound metabolism; protoporphyrin-IX biosynthesis; 5-aminolevulinate from L-glutamyl-tRNA(Glu): step 1/2. In terms of biological role, catalyzes the NADPH-dependent reduction of glutamyl-tRNA(Glu) to glutamate 1-semialdehyde (GSA). This is Glutamyl-tRNA reductase from Francisella tularensis subsp. tularensis (strain WY96-3418).